The chain runs to 317 residues: Lipoyl synthase (317 aa).

Residues 1–28 (MDSQPQSKKAARGADKTARNPIPIIPAP) are disordered. Cysteine 64, cysteine 69, cysteine 75, cysteine 90, cysteine 94, cysteine 97, and serine 304 together coordinate [4Fe-4S] cluster. The Radical SAM core domain maps to 76-293 (FGGGTATFMI…QRDGMAMGFR (218 aa)).

This sequence belongs to the radical SAM superfamily. Lipoyl synthase family. The cofactor is [4Fe-4S] cluster.

Its subcellular location is the cytoplasm. It catalyses the reaction [[Fe-S] cluster scaffold protein carrying a second [4Fe-4S](2+) cluster] + N(6)-octanoyl-L-lysyl-[protein] + 2 oxidized [2Fe-2S]-[ferredoxin] + 2 S-adenosyl-L-methionine + 4 H(+) = [[Fe-S] cluster scaffold protein] + N(6)-[(R)-dihydrolipoyl]-L-lysyl-[protein] + 4 Fe(3+) + 2 hydrogen sulfide + 2 5'-deoxyadenosine + 2 L-methionine + 2 reduced [2Fe-2S]-[ferredoxin]. Its pathway is protein modification; protein lipoylation via endogenous pathway; protein N(6)-(lipoyl)lysine from octanoyl-[acyl-carrier-protein]: step 2/2. In terms of biological role, catalyzes the radical-mediated insertion of two sulfur atoms into the C-6 and C-8 positions of the octanoyl moiety bound to the lipoyl domains of lipoate-dependent enzymes, thereby converting the octanoylated domains into lipoylated derivatives. This chain is Lipoyl synthase, found in Acidithiobacillus ferrooxidans (strain ATCC 23270 / DSM 14882 / CIP 104768 / NCIMB 8455) (Ferrobacillus ferrooxidans (strain ATCC 23270)).